A 339-amino-acid polypeptide reads, in one-letter code: Annexin A2 (339 aa).

Position 2 is an N-acetylserine (Ser-2). The segment at 2–24 (STVHEILSKLSLEGDHSLPPSAY) is S100A10-binding site. Tyr-24 bears the Phosphotyrosine; by SRC mark. A Phosphothreonine; by PKC modification is found at Thr-26. 4 Annexin repeats span residues 33–104 (FDAD…GLLK), 105–176 (TPSQ…ALAK), 189–261 (ELID…NLVQ), and 265–336 (NKQL…NLCG).

It belongs to the annexin family. In terms of assembly, heterotetramer containing 2 light chains of S100A10/p11 and 2 heavy chains of ANXA2/p36.

The protein localises to the secreted. It localises to the extracellular space. It is found in the extracellular matrix. The protein resides in the basement membrane. Functionally, calcium-regulated membrane-binding protein whose affinity for calcium is greatly enhanced by anionic phospholipids. It binds two calcium ions with high affinity. This Gallus gallus (Chicken) protein is Annexin A2 (ANXA2).